We begin with the raw amino-acid sequence, 459 residues long: FBD-associated F-box protein At1g61320 (459 aa).

The disordered stretch occupies residues 1–25; it reads MAPPTKRTRVEMAESSNKRMKPSET. An F-box domain is found at 21–69; that stretch reads KPSETVPEDVLELMMSTYLPVQSLLTTRVLSKRFRETEVRSLDLDFSGI. Positions 396 to 428 constitute an FBD domain; the sequence is VKIIGYKGHWHELDIVEFFVKNAPSLKRLELQM.

The sequence is that of FBD-associated F-box protein At1g61320 from Arabidopsis thaliana (Mouse-ear cress).